A 612-amino-acid polypeptide reads, in one-letter code: Kelch repeat and BTB domain-containing protein 3 (612 aa).

The 68-residue stretch at 52 to 119 folds into the BTB domain; sequence YDFKIIMKDE…AYTGKTKITD (68 aa). The BACK domain occupies 150–250; sequence NLVNCLQLLS…VRLHQLSEET (101 aa). 5 Kelch repeats span residues 291–337, 339–390, 400–450, 452–502, and 548–595; these read STTE…GSSL, SYGE…STMK, MALD…PEAS, CQNV…ATLI, and GIED…FYCQ.

The polypeptide is Kelch repeat and BTB domain-containing protein 3 (Pongo abelii (Sumatran orangutan)).